The sequence spans 155 residues: Small ribosomal subunit protein uS7cz/uS7cy (155 aa).

It belongs to the universal ribosomal protein uS7 family. Part of the 30S ribosomal subunit.

It is found in the plastid. The protein localises to the chloroplast. Its function is as follows. One of the primary rRNA binding proteins, it binds directly to 16S rRNA where it nucleates assembly of the head domain of the 30S subunit. This is Small ribosomal subunit protein uS7cz/uS7cy (rps7-A) from Cucumis sativus (Cucumber).